We begin with the raw amino-acid sequence, 141 residues long: Ubiquitin-like protein ATG12 (141 aa).

The disordered stretch occupies residues 24–54 (LELSPETAIPEPPSSVAVSPGTEEPPGDTKK). A Glycyl lysine isopeptide (Gly-Lys) (interchain with K-? in acceptor protein) cross-link involves residue Gly-141.

This sequence belongs to the ATG12 family. Forms a conjugate with ATG5. Part of the minor complex composed of 4 sets of ATG12-ATG5 and ATG16L1 (400 kDa); this complex interacts with ATG3 leading to disruption of ATG7 interaction and promotion of ATG8-like proteins lipidation. Forms an 800-kDa complex composed of ATG12-ATG5 and ATG16L2. Interacts with DHX58/RIG-1, IFIH1/MDA5 and MAVS/IPS-1 in monomeric form as well as in ATG12-ATG5 conjugate. The interaction with MAVS is further enhanced upon vesicular stomatitis virus (VSV) infection. Interacts with ATG3; this interaction is essential for phosphatidylethanolamine (PE)-conjugated ATG8-like proteins formation. Interacts with ATG7. Interacts with ATG10. The ATG12-ATG5 conjugate interacts with RAB33A; this interaction is bridged by ATG16L1 and promotes ATG12-ATG5-ATG16L1 complex recruitment to phagophores. Interacts with TECPR1. Interacts with SH3BGRL. The ATG12-ATG5 conjugate interacts with PDCD6IP (via the BRO1 domain); this interaction is bridged by ATG12 and promotes multiple PDCD6IP-mediated functions such as endolysosomal trafficking, macroautophagy and exosome biogenesis. Post-translationally, acetylated by EP300.

The protein localises to the cytoplasm. It localises to the preautophagosomal structure membrane. Ubiquitin-like protein involved in autophagy vesicles formation. Conjugation with ATG5 through a ubiquitin-like conjugating system involving also ATG7 as an E1-like activating enzyme and ATG10 as an E2-like conjugating enzyme, is essential for its function. The ATG12-ATG5 conjugate acts as an E3-like enzyme which is required for lipidation of ATG8 family proteins and their association to the vesicle membranes. The ATG12-ATG5 conjugate also negatively regulates the innate antiviral immune response by blocking the type I IFN production pathway through direct association with RARRES3 and MAVS. Also plays a role in translation or delivery of incoming viral RNA to the translation apparatus. As part of the ATG8 conjugation system with ATG5 and ATG16L1, required for recruitment of LRRK2 to stressed lysosomes and induction of LRRK2 kinase activity in response to lysosomal stress. This Rattus norvegicus (Rat) protein is Ubiquitin-like protein ATG12.